The sequence spans 335 residues: Nucleoid-associated protein SeAg_B2375 (335 aa).

Belongs to the YejK family.

It localises to the cytoplasm. The protein localises to the nucleoid. The chain is Nucleoid-associated protein SeAg_B2375 from Salmonella agona (strain SL483).